Consider the following 89-residue polypeptide: Large ribosomal subunit protein bL28 (89 aa).

The protein belongs to the bacterial ribosomal protein bL28 family.

The sequence is that of Large ribosomal subunit protein bL28 from Chlamydia abortus (strain DSM 27085 / S26/3) (Chlamydophila abortus).